The sequence spans 979 residues: Receptor-type tyrosine-protein phosphatase-like N (979 aa).

The N-terminal stretch at 1–34 (MRRPRRPGGLGGSGGLRLLLCLLLLSSRPGGCSA) is a signal peptide. Residues 35–131 (VSAHGCLFDR…RPRDRSGLAP (97 aa)) form an RESP18 homology domain region. Residues 35–575 (VSAHGCLFDR…QTAHSTSPMR (541 aa)) lie on the Lumenal side of the membrane. Residues Cys53 and Cys62 are joined by a disulfide bond. Composition is skewed to basic and acidic residues over residues 112–127 (RIPR…RDRS) and 304–323 (RAED…RGEK). Disordered stretches follow at residues 112 to 173 (RIPR…SSSL), 289 to 329 (SRAR…SPAV), and 393 to 439 (VEGR…ARPP). Ser308 is modified (phosphoserine). The segment covering 415 to 433 (SPTSSEVQQVPSPVSSEPP) has biased composition (low complexity). A glycan (O-linked (GalNAc...) threonine) is linked at Thr441. The interval 449-575 (SPLGQSQPTV…QTAHSTSPMR (127 aa)) is sufficient for dimerization of proICA512. 2 N-linked (GlcNAc...) asparagine glycosylation sites follow: Asn506 and Asn524. Residues 576 to 600 (SVLLTLVALAGVAGLLVALAVALCV) traverse the membrane as a helical segment. A sufficient for dimerization of proICA512 region spans residues 601 to 732 (RQHARQQDKE…PNTCATAQGE (132 aa)). Residues 601-979 (RQHARQQDKE…VNAILKALPQ (379 aa)) are Cytoplasmic-facing. The tract at residues 643 to 680 (NRAEGPPEPSRVSSVSSQFSDAAQASPSSHSSTPSWCE) is disordered. Low complexity predominate over residues 652–677 (SRVSSVSSQFSDAAQASPSSHSSTPS). One can recognise a Tyrosine-protein phosphatase domain in the interval 709–969 (LAKEWQALCA…EFALTAVAEE (261 aa)). Lys754 participates in a covalent cross-link: Glycyl lysine isopeptide (Lys-Gly) (interchain with G-Cter in SUMO).

It belongs to the protein-tyrosine phosphatase family. Receptor class 8 subfamily. As to quaternary structure, homodimer; shown for the unprocessed protein (proICA512) in the endoplasmic reticulum and resolved during protein maturation as ICA512-TMF seems to be predominantly monomeric in secretory granules; however, ICA512-CCF interacts with ICA512-TMF disrupting the ICA512-TMF:SNTB2 complex. The isolated lumenal RESP18 homology domain has been shown to form disulfide-linked homooligomers. Interacts (via cytoplasmic domain) with phosphorylated SNTB2; this protects PTPRN against cleavage by CAPN1 to produce ICA512-CCF. Dephosphorylation of SNTB2 upon insulin stimulation disrupts the interaction and results in PTPRN cleavage. Interacts with SNX19. ICA512-CCF interacts with PIAS4; in the nucleus. Interacts with STAT5B (phosphorylated); down-regulated by ICA512-CCF sumoylation; ICA512-CCF prevents STAT5B dephosphorylation; ICA512-CCF mediates interaction of STAT5B with PIAS4. Interacts (via RESP18 homology domain) with insulin and proinsulin. Interacts with PTPRN2, PTPRA and PTPRE. N-glycosylated. Post-translationally, O-glycosylated with core 1 or possibly core 8 glycans. In terms of processing, subject to proteolytic cleavage at multiple sites. Subject to cleavage on a pair of basic residues. On exocytosis of secretory granules in pancreatic beta-cells ICA512-TMF is transiently inserted in the plasma-membrane and cleaved by mu-type calpain CPN1 to yield ICA512-CCF. Sumoylated at two sites including Lys-754. Sumoylation decreases interaction with STAT5. Expression is restricted to neuroendocrine cells. Found in pancreas, brain and pituitary.

Its subcellular location is the membrane. The protein localises to the cytoplasmic vesicle. The protein resides in the secretory vesicle membrane. It is found in the perikaryon. It localises to the cell projection. Its subcellular location is the axon. The protein localises to the synapse. The protein resides in the cell membrane. It is found in the endosome. It localises to the nucleus. In terms of biological role, plays a role in vesicle-mediated secretory processes. Required for normal accumulation of secretory vesicles in hippocampus, pituitary and pancreatic islets. Required for the accumulation of normal levels of insulin-containing vesicles and preventing their degradation. Plays a role in insulin secretion in response to glucose stimuli. Required for normal accumulation of the neurotransmitters norepinephrine, dopamine and serotonin in the brain. In females, but not in males, required for normal accumulation and secretion of pituitary hormones, such as luteinizing hormone (LH) and follicle-stimulating hormone (FSH). Required to maintain normal levels of renin expression and renin release. Seems to lack intrinsic enzyme activity. May regulate catalytic active protein-tyrosine phosphatases such as PTPRA through dimerization. ICA512-TMF regulates dynamics and exocytosis of insulin secretory granules (SGs); binding of ICA512-TMF to SNTB2/beta-2-syntrophin is proposed to restrain SGs mobility and exocytosis by tethering them to the actin cytoskeleton depending on UTRN; the function is inhibited by cytoplasmic ICA512-CFF dimerizing with ICA512-TMF and displacing SNTB2. Its function is as follows. ICA512-CCF translocated to the nucleus promotes expression of insulin and other granule-related genes; the function implicates binding to and regulating activity of STAT5B probably by preventing its dephosphorylation and potentially by inducing its sumoylation by recruiting PIAS4. Enhances pancreatic beta-cell proliferation by converging with signaling by STAT5B and STAT3. ICA512-CCF located in the cytoplasm regulates dynamics and exocytosis of insulin secretory granules (SGs) by dimerizing with ICA512-TMF and displacing SNTB2 thus enhancing SGs mobility and exocytosis. This Homo sapiens (Human) protein is Receptor-type tyrosine-protein phosphatase-like N (PTPRN).